A 163-amino-acid chain; its full sequence is Protein-export protein SecB (163 aa).

The protein belongs to the SecB family. In terms of assembly, homotetramer, a dimer of dimers. One homotetramer interacts with 1 SecA dimer.

It is found in the cytoplasm. In terms of biological role, one of the proteins required for the normal export of preproteins out of the cell cytoplasm. It is a molecular chaperone that binds to a subset of precursor proteins, maintaining them in a translocation-competent state. It also specifically binds to its receptor SecA. The sequence is that of Protein-export protein SecB from Shewanella woodyi (strain ATCC 51908 / MS32).